The following is a 100-amino-acid chain: UPF0251 protein swp_0615 (100 aa).

It belongs to the UPF0251 family.

In Shewanella piezotolerans (strain WP3 / JCM 13877), this protein is UPF0251 protein swp_0615.